A 447-amino-acid polypeptide reads, in one-letter code: Phosphoglucosamine mutase (447 aa).

Ser-107 serves as the catalytic Phosphoserine intermediate. 4 residues coordinate Mg(2+): Ser-107, Asp-246, Asp-248, and Asp-250. Ser-107 is subject to Phosphoserine.

The protein belongs to the phosphohexose mutase family. It depends on Mg(2+) as a cofactor. Post-translationally, activated by phosphorylation.

The enzyme catalyses alpha-D-glucosamine 1-phosphate = D-glucosamine 6-phosphate. Functionally, catalyzes the conversion of glucosamine-6-phosphate to glucosamine-1-phosphate. The polypeptide is Phosphoglucosamine mutase (Ralstonia pickettii (strain 12J)).